The primary structure comprises 92 residues: Small ribosomal subunit protein uS19 (92 aa).

The protein belongs to the universal ribosomal protein uS19 family.

Functionally, protein S19 forms a complex with S13 that binds strongly to the 16S ribosomal RNA. This Trichormus variabilis (strain ATCC 29413 / PCC 7937) (Anabaena variabilis) protein is Small ribosomal subunit protein uS19.